A 1267-amino-acid chain; its full sequence is Eukaryotic translation initiation factor 3 subunit A (1267 aa).

The stretch at 82 to 118 (NIKSLEDVVRAYLKLAEEKTETAKEESQQMVLDIEDL) forms a coiled coil. The 184-residue stretch at 315-498 (MQRMSTRVLL…RTLSFGSDLN (184 aa)) folds into the PCI domain. Basic and acidic residues-rich tracts occupy residues 792–835 (EERK…LEQE), 844–1086 (YQER…DSRP), and 1098–1147 (WRER…EGSA). A disordered region spans residues 792–1267 (EERKKQRKED…DDDGWTTVRR (476 aa)). 3 consecutive repeat copies span residues 956-965 (DDDRGPRRGG), 966-975 (DDERPPRRGF), and 976-985 (DDDRGTRRGF). Residues 956 to 1073 (DDDRGPRRGG…DDERGGRRGM (118 aa)) form a 12 X 10 AA approximate tandem repeats of D-[DE]-[DE]-R-[GP]-[GPQT]-R-R-[GPS]-[ADFGIM] region. One copy of the 4; truncated repeat lies at 986–994 (DDDRGQRRG). 2 repeat units span residues 995–1004 (DDDRGPRRGM) and 1005–1014 (DDDRGPRRPI). Residues 1015-1023 (DDDRGPRRS) form a 7; truncated repeat. 2 consecutive repeat copies span residues 1024–1033 (DDDRGPRRGF) and 1034–1043 (DDDRGPRRGM). The stretch at 1044–1053 (DEPRGPRRGA) is one 10; approximate repeat. Residues 1054–1063 (DDDWGPRRGG) form repeat 11. A 12; approximate repeat occupies 1064 to 1073 (DDERGGRRGM). A compositionally biased stretch (gly residues) spans 1150 to 1159 (RGGGGGGGGE). Residues 1162 to 1256 (SSWRDSRRED…KENPRRTKNE (95 aa)) are compositionally biased toward basic and acidic residues.

This sequence belongs to the eIF-3 subunit A family. Component of the eukaryotic translation initiation factor 3 (eIF-3) complex, which is composed of 13 subunits: eif3a, eif3b, eif3c, eif3d, eif3e, eif3f, eif3g, eif3h, eif3i, eif3j, eif3k, eif3l and eif3m.

It localises to the cytoplasm. RNA-binding component of the eukaryotic translation initiation factor 3 (eIF-3) complex, which is involved in protein synthesis of a specialized repertoire of mRNAs and, together with other initiation factors, stimulates binding of mRNA and methionyl-tRNAi to the 40S ribosome. The eIF-3 complex specifically targets and initiates translation of a subset of mRNAs involved in cell proliferation. The chain is Eukaryotic translation initiation factor 3 subunit A (eif3a) from Danio rerio (Zebrafish).